The sequence spans 687 residues: A-kinase anchor protein 8 (687 aa).

The segment at 1-195 (MEQSYGGYGA…FLRGRGQGRF (195 aa)) is interaction with MCM2. Residues 1–210 (MEQSYGGYGA…SSTFIRSDPF (210 aa)) are interaction with DPY30. S72 carries the post-translational modification Phosphoserine. A disordered region spans residues 104-124 (SKEGGRGGISSGGEGMQDRDS). R109 carries the asymmetric dimethylarginine; alternate modification. R109 is modified (omega-N-methylarginine; alternate). A compositionally biased stretch (gly residues) spans 109 to 118 (RGGISSGGEG). Residues 109 to 201 (RGGISSGGEG…QGRFQDRSNS (93 aa)) form an interaction with DDX5 region. The interval 127–152 (RFQPYESYDSRPCMPEHTPYRPSYSY) is nuclear matrix targeting site. The segment at 189-221 (GRGQGRFQDRSNSSTFIRSDPFMPPSASSEPLS) is disordered. Residue S199 is modified to Phosphoserine. 2 positions are modified to omega-N-methylarginine: R233 and R277. The interval 278–380 (SQTRIRDWPR…KQRRRDRMRD (103 aa)) is disordered. Basic and acidic residues-rich tracts occupy residues 281–295 (RIRDWPRRRGFERFG) and 312–321 (PDAKLARADS). A Bipartite nuclear localization signal motif is present at residues 287–304 (RRRGFERFGPDNMGRKRK). A Glycyl lysine isopeptide (Lys-Gly) (interchain with G-Cter in SUMO2) cross-link involves residue K315. S321, S326, and S337 each carry phosphoserine. The span at 322–332 (EGDLSENDDGA) shows a compositional bias: acidic residues. Residues 336-358 (RSGDEEFRGEDDLCDSRKQRGEK) are compositionally biased toward basic and acidic residues. Residues 385–448 (RIQFACSVCK…NKKIEKRRQE (64 aa)) form an involved in chromatin-binding region. 2 consecutive C2H2 AKAP95-type zinc fingers follow at residues 390–412 (CSVCKFRSFEDEEIQKHLQSKFH) and 479–502 (CLACDMLIPAQHQLLQRHLHSVDH). The tract at residues 523-565 (SVLNNKHIVKMLEKYLKGEDPFVNETADLETEGDENLGEEKET) is involved in condensin complex recruitment. T553 bears the Phosphothreonine mark. K563 is covalently cross-linked (Glycyl lysine isopeptide (Lys-Gly) (interchain with G-Cter in SUMO2)). Positions 568 to 585 (EVAAEVLAEVITAAVKAV) are RII-binding. Residues 572–589 (EVLAEVITAAVKAVEGDG) are required for interaction with MYCBP. Positions 606–687 (VDTAEAGSDS…DAEAKDTPTE (82 aa)) are disordered. Residues 633–648 (RNMEDMARGEAAEARN) are compositionally biased toward basic and acidic residues. Over residues 649–666 (EAAVPAAAAGSPVPVIAI) the composition is skewed to low complexity. S659 is modified (phosphoserine).

Belongs to the AKAP95 family. As to quaternary structure, binds to dimeric RII-alpha regulatory subunit of PKA during mitosis. Interacts (via C-terminus) with FIGN. Interacts with NCAPD2, CCND1, CCND3, MCM2, RPS6KA1, PDE4A, CASP3. Interacts with DDX5, CCNE1. Interacts with NFKB1; detetcted in the cytoplasm. Interacts with MYCBP; MYCBP is translocated to the nucleus and the interaction prevents the association of the PKA catalytic subunit leading to suppression of PKA activity. Interacts with DPY30; mediating AKAP8 association with at least the MLL4/WBP7 HMT complex. Interacts with HDAC3; increased during mitosis. Interacts with GJA1; in the nucleus and in the nuclear membrane; the nuclear association increases with progress of cell cycle G1, S and G2 phase and decreases in M phase. Phosphorylated on tyrosine residues probably by SRC subfamily protein kinases; multiple phosphorylation is leading to dissociation from nuclear structures implicated in chromatin structural changes. Widely expressed. The protein has been detected in liver, fibroblasts, granulosa, myoblast, lymphoma and Sertoli cells.

Its subcellular location is the nucleus matrix. It localises to the nucleus. It is found in the nucleolus. The protein localises to the cytoplasm. In terms of biological role, anchoring protein that mediates the subcellular compartmentation of cAMP-dependent protein kinase (PKA type II). Acts as an anchor for a PKA-signaling complex onto mitotic chromosomes, which is required for maintenance of chromosomes in a condensed form throughout mitosis. Recruits condensin complex subunit NCAPD2 to chromosomes required for chromatin condensation; the function appears to be independent from PKA-anchoring. May help to deliver cyclin D/E to CDK4 to facilitate cell cycle progression. Required for cell cycle G2/M transition and histone deacetylation during mitosis. In mitotic cells recruits HDAC3 to the vicinity of chromatin leading to deacetylation and subsequent phosphorylation at 'Ser-10' of histone H3; in this function may act redundantly with AKAP8L. Involved in nuclear retention of RPS6KA1 upon ERK activation thus inducing cell proliferation. May be involved in regulation of DNA replication by acting as scaffold for MCM2. Enhances HMT activity of the KMT2 family MLL4/WBP7 complex and is involved in transcriptional regulation. In a teratocarcinoma cell line is involved in retinoic acid-mediated induction of developmental genes implicating H3 'Lys-4' methylation. May be involved in recruitment of active CASP3 to the nucleus in apoptotic cells. May act as a carrier protein of GJA1 for its transport to the nucleus. May play a repressive role in the regulation of rDNA transcription. Preferentially binds GC-rich DNA in vitro. In cells, associates with ribosomal RNA (rRNA) chromatin, preferentially with rRNA promoter and transcribed regions. Involved in modulation of Toll-like receptor signaling. Required for the cAMP-dependent suppression of TNF-alpha in early stages of LPS-induced macrophage activation; the function probably implicates targeting of PKA to NFKB1. This Rattus norvegicus (Rat) protein is A-kinase anchor protein 8 (Akap8).